A 240-amino-acid chain; its full sequence is UDP-2,3-diacylglucosamine hydrolase (240 aa).

Positions 8, 10, 41, 78, and 113 each coordinate Mn(2+). 78–79 provides a ligand contact to substrate; sequence NR. 5 residues coordinate substrate: Asp121, Ser159, Asn163, Lys166, and His194. Mn(2+) contacts are provided by His194 and His196.

It belongs to the LpxH family. Mn(2+) serves as cofactor.

Its subcellular location is the cell inner membrane. The enzyme catalyses UDP-2-N,3-O-bis[(3R)-3-hydroxytetradecanoyl]-alpha-D-glucosamine + H2O = 2-N,3-O-bis[(3R)-3-hydroxytetradecanoyl]-alpha-D-glucosaminyl 1-phosphate + UMP + 2 H(+). Its pathway is glycolipid biosynthesis; lipid IV(A) biosynthesis; lipid IV(A) from (3R)-3-hydroxytetradecanoyl-[acyl-carrier-protein] and UDP-N-acetyl-alpha-D-glucosamine: step 4/6. In terms of biological role, hydrolyzes the pyrophosphate bond of UDP-2,3-diacylglucosamine to yield 2,3-diacylglucosamine 1-phosphate (lipid X) and UMP by catalyzing the attack of water at the alpha-P atom. Involved in the biosynthesis of lipid A, a phosphorylated glycolipid that anchors the lipopolysaccharide to the outer membrane of the cell. This chain is UDP-2,3-diacylglucosamine hydrolase, found in Shewanella baltica (strain OS223).